A 53-amino-acid polypeptide reads, in one-letter code: Large ribosomal subunit protein bL32c (53 aa).

Positions 1–21 (MAVPKKRTSKSKKKSRRSHWI) are disordered.

It belongs to the bacterial ribosomal protein bL32 family.

Its subcellular location is the plastid. The protein resides in the chloroplast. The protein is Large ribosomal subunit protein bL32c (rpl32) of Cyanidium caldarium (Red alga).